The following is a 103-amino-acid chain: Small ribosomal subunit protein uS10 (103 aa).

It belongs to the universal ribosomal protein uS10 family. As to quaternary structure, part of the 30S ribosomal subunit.

In terms of biological role, involved in the binding of tRNA to the ribosomes. This is Small ribosomal subunit protein uS10 from Vibrio campbellii (strain ATCC BAA-1116).